The chain runs to 159 residues: Globin-like protein (159 aa).

Positions 1–152 (MSMNRQEISD…FNAESQTHLK (152 aa)) constitute a Globin domain. Residue histidine 101 coordinates heme.

Belongs to the globin family. In terms of assembly, homodimer. Expressed mainly in a subset of neuronal cells and in head muscular tissue.

It localises to the cytoplasm. Its function is as follows. May be a globin and may play a role in oxygen transport. This is Globin-like protein (glb-1) from Caenorhabditis elegans.